The following is a 695-amino-acid chain: A-kinase anchor protein 17A (695 aa).

The tract at residues 83-112 (VENKSLVKSFLACLDGKTIKLSGFSDILKV) is PKA-RI and PKA-RII subunit binding domain. K118 participates in a covalent cross-link: Glycyl lysine isopeptide (Lys-Gly) (interchain with G-Cter in SUMO1); alternate. A Glycyl lysine isopeptide (Lys-Gly) (interchain with G-Cter in SUMO2); alternate cross-link involves residue K118. An RRM domain is found at 147–256 (DTIHLEGLPC…KAVACNIKVS (110 aa)). Residues 279 to 337 (QELEQQREEQKRREKEAEERQRAEERKQKELEELERERKREEKLRKREQKQRDRELRRN) are disordered. A PKA-RI-alpha subunit binding domain region spans residues 425–454 (LGLQRKERELRERLLSILLSKKPDDSHTHD). The tract at residues 482-695 (TTLHPLGGQP…PSRHRSTWNR (214 aa)) is disordered. S537 is modified (phosphoserine). Basic and acidic residues predominate over residues 567-585 (VSRKDTRSEQDKCNREPSK). Composition is skewed to basic residues over residues 598-609 (RHKRERSRARRA) and 618-628 (RKERRPHKKHA). Residues 629-644 (YKDDSPRRRSTSPDHT) show a composition bias toward basic and acidic residues. Position 633 is a phosphoserine (S633). Composition is skewed to basic residues over residues 645 to 658 (RSRRSHSKDRHRRE) and 666 to 695 (SASRKHSRHRRRSERSRSRSPSRHRSTWNR).

As to quaternary structure, monomer. Component of the spliceosome. Interacts with ZRANB2 and SFRS1/ASF through its Arg/Ser-rich domain. Interacts with RI and RII subunits of PKA. As to expression, widely expressed. Found in heart, brain, lung, liver, skeletal muscle, kidney and pancreas. Expressed in activated B-cells and placenta. Expressed in all cell lines tested including Jurkat-TAg, U-937 and HEK293 cells.

Its subcellular location is the nucleus speckle. In terms of biological role, splice factor regulating alternative splice site selection for certain mRNA precursors. Mediates regulation of pre-mRNA splicing in a PKA-dependent manner. In Homo sapiens (Human), this protein is A-kinase anchor protein 17A (AKAP17A).